A 370-amino-acid polypeptide reads, in one-letter code: Heme A synthase (370 aa).

8 helical membrane-spanning segments follow: residues 15 to 35 (VRIWLTLVAALIAVMVLVGGA), 104 to 124 (VIGIVYLLPFLWFLWRGAIGP), 129 to 149 (ALWIIFALGALQGAVGWWMVA), 161 to 181 (VRLATHLSLALIIYAAIVWTL), 200 to 220 (ALALLGLTFVQLYAGALVAGL), 261 to 280 (QFDHRMLAYALWTLAALHMI), 293 to 313 (GAVLLFLALTVQAALGIFTVL), and 317 to 337 (PIDLALAHQAMALVVLTLAVL). His-264 contacts heme. His-324 serves as a coordination point for heme.

The protein belongs to the COX15/CtaA family. Type 2 subfamily. Interacts with CtaB. Heme b is required as a cofactor.

The protein resides in the cell membrane. It carries out the reaction Fe(II)-heme o + 2 A + H2O = Fe(II)-heme a + 2 AH2. Its pathway is porphyrin-containing compound metabolism; heme A biosynthesis; heme A from heme O: step 1/1. In terms of biological role, catalyzes the conversion of heme O to heme A by two successive hydroxylations of the methyl group at C8. The first hydroxylation forms heme I, the second hydroxylation results in an unstable dihydroxymethyl group, which spontaneously dehydrates, resulting in the formyl group of heme A. This Rhodopseudomonas palustris (strain TIE-1) protein is Heme A synthase.